Here is a 465-residue protein sequence, read N- to C-terminus: Poly(A) polymerase I (465 aa).

Active-site residues include D80, D82, and D162. Positions 430–465 are disordered; the sequence is APPEQKGMLNELDDDPAPRRRRSRPRKRAPRREGTV. The segment covering 448-459 has biased composition (basic residues); the sequence is RRRRSRPRKRAP.

This sequence belongs to the tRNA nucleotidyltransferase/poly(A) polymerase family.

The enzyme catalyses RNA(n) + ATP = RNA(n)-3'-adenine ribonucleotide + diphosphate. Functionally, adds poly(A) tail to the 3' end of many RNAs, which usually targets these RNAs for decay. Plays a significant role in the global control of gene expression, through influencing the rate of transcript degradation, and in the general RNA quality control. In Salmonella typhimurium (strain LT2 / SGSC1412 / ATCC 700720), this protein is Poly(A) polymerase I.